Here is a 442-residue protein sequence, read N- to C-terminus: D-serine dehydratase (442 aa).

Lysine 118 carries the N6-(pyridoxal phosphate)lysine modification.

The protein belongs to the serine/threonine dehydratase family. DsdA subfamily. As to quaternary structure, monomer. Requires pyridoxal 5'-phosphate as cofactor.

It carries out the reaction D-serine = pyruvate + NH4(+). The polypeptide is D-serine dehydratase (Escherichia fergusonii (strain ATCC 35469 / DSM 13698 / CCUG 18766 / IAM 14443 / JCM 21226 / LMG 7866 / NBRC 102419 / NCTC 12128 / CDC 0568-73)).